Consider the following 237-residue polypeptide: UPF0502 protein HEAR1280 (237 aa).

Polar residues predominate over residues 1-13 (MNTEVMHSTSTES). Residues 1–21 (MNTEVMHSTSTESDAQEKPQA) form a disordered region.

This sequence belongs to the UPF0502 family.

The chain is UPF0502 protein HEAR1280 from Herminiimonas arsenicoxydans.